The following is a 275-amino-acid chain: Large ribosomal subunit protein uL2 (275 aa).

A disordered region spans residues 216-275 (GIRPQTRGSAMNPIDHPHGGGEGKTNSGRHPVTPWGMPTKGYKTRKKKASDKLIISKRKK). Residues 257–275 (YKTRKKKASDKLIISKRKK) show a composition bias toward basic residues.

The protein belongs to the universal ribosomal protein uL2 family. In terms of assembly, part of the 50S ribosomal subunit. Forms a bridge to the 30S subunit in the 70S ribosome.

One of the primary rRNA binding proteins. Required for association of the 30S and 50S subunits to form the 70S ribosome, for tRNA binding and peptide bond formation. It has been suggested to have peptidyltransferase activity; this is somewhat controversial. Makes several contacts with the 16S rRNA in the 70S ribosome. The sequence is that of Large ribosomal subunit protein uL2 from Aliarcobacter butzleri (strain RM4018) (Arcobacter butzleri).